The following is a 344-amino-acid chain: RNA 3'-terminal phosphate cyclase (344 aa).

Residues Gln102 and Phe284–Gln288 contribute to the ATP site. His308 acts as the Tele-AMP-histidine intermediate in catalysis.

The protein belongs to the RNA 3'-terminal cyclase family. Type 1 subfamily.

The protein localises to the cytoplasm. The enzyme catalyses a 3'-end 3'-phospho-ribonucleotide-RNA + ATP = a 3'-end 2',3'-cyclophospho-ribonucleotide-RNA + AMP + diphosphate. Its function is as follows. Catalyzes the conversion of 3'-phosphate to a 2',3'-cyclic phosphodiester at the end of RNA. The mechanism of action of the enzyme occurs in 3 steps: (A) adenylation of the enzyme by ATP; (B) transfer of adenylate to an RNA-N3'P to produce RNA-N3'PP5'A; (C) and attack of the adjacent 2'-hydroxyl on the 3'-phosphorus in the diester linkage to produce the cyclic end product. The biological role of this enzyme is unknown but it is likely to function in some aspects of cellular RNA processing. The polypeptide is RNA 3'-terminal phosphate cyclase (Thermococcus gammatolerans (strain DSM 15229 / JCM 11827 / EJ3)).